The primary structure comprises 510 residues: NAD(P)H-quinone oxidoreductase subunit 2 B, chloroplastic (510 aa).

12 consecutive transmembrane segments (helical) span residues 24-44 (LLLF…GLIL), 59-79 (WFYF…LFRW), 99-119 (IFQF…VEYI), 124-144 (MAIT…MFLC), 149-169 (LITI…LSGY), 183-203 (YLLM…WLYG), 229-249 (ISIA…PAPF), 295-315 (WHLL…LLAI), 323-343 (MLAY…IVGD), 354-374 (YMLF…LFGL), 395-415 (ALSL…AGFF), and 418-438 (LYLF…IGLL).

Belongs to the complex I subunit 2 family. In terms of assembly, NDH is composed of at least 16 different subunits, 5 of which are encoded in the nucleus.

It is found in the plastid. The protein localises to the chloroplast thylakoid membrane. The catalysed reaction is a plastoquinone + NADH + (n+1) H(+)(in) = a plastoquinol + NAD(+) + n H(+)(out). The enzyme catalyses a plastoquinone + NADPH + (n+1) H(+)(in) = a plastoquinol + NADP(+) + n H(+)(out). In terms of biological role, NDH shuttles electrons from NAD(P)H:plastoquinone, via FMN and iron-sulfur (Fe-S) centers, to quinones in the photosynthetic chain and possibly in a chloroplast respiratory chain. The immediate electron acceptor for the enzyme in this species is believed to be plastoquinone. Couples the redox reaction to proton translocation, and thus conserves the redox energy in a proton gradient. This chain is NAD(P)H-quinone oxidoreductase subunit 2 B, chloroplastic, found in Agrostis stolonifera (Creeping bentgrass).